A 536-amino-acid polypeptide reads, in one-letter code: Formate--tetrahydrofolate ligase (536 aa).

Residue 51-58 (TPAGEGKT) coordinates ATP.

Belongs to the formate--tetrahydrofolate ligase family.

The enzyme catalyses (6S)-5,6,7,8-tetrahydrofolate + formate + ATP = (6R)-10-formyltetrahydrofolate + ADP + phosphate. The protein operates within one-carbon metabolism; tetrahydrofolate interconversion. In Thermoplasma acidophilum (strain ATCC 25905 / DSM 1728 / JCM 9062 / NBRC 15155 / AMRC-C165), this protein is Formate--tetrahydrofolate ligase.